Consider the following 252-residue polypeptide: MAQPKITINNLNFYYGSNRALKDVNLEIQAHAVTALIGPSGCGKSTFLRTLNRLNDLIDGVRISGEILLDGQNIYAPEVDVVALRKRVGMVFQRPNPFPMSIYDNIAYGPRIHGITSRRELDGIVERSLKAAALWDEVAGRLRHSALGLSGGQQQRLCIARLLAVEPEVVLMDEPSSALDPISTLKIEELIHNLKEKYTIVIVTHNMQQAARVSDYTAFFLNGEMVEYDETEIIFTKPRDKRTEDYITGRFG.

Residues 6–247 (ITINNLNFYY…PRDKRTEDYI (242 aa)) enclose the ABC transporter domain. Residue 38 to 45 (GPSGCGKS) coordinates ATP.

Belongs to the ABC transporter superfamily. Phosphate importer (TC 3.A.1.7) family. The complex is composed of two ATP-binding proteins (PstB), two transmembrane proteins (PstC and PstA) and a solute-binding protein (PstS).

Its subcellular location is the cell membrane. The enzyme catalyses phosphate(out) + ATP + H2O = ADP + 2 phosphate(in) + H(+). Its function is as follows. Part of the ABC transporter complex PstSACB involved in phosphate import. Responsible for energy coupling to the transport system. The protein is Phosphate import ATP-binding protein PstB of Moorella thermoacetica (strain ATCC 39073 / JCM 9320).